Reading from the N-terminus, the 569-residue chain is Protein GPR108 (569 aa).

An N-terminal signal peptide occupies residues 1–34 (MAVSERRGLSGESPTQCRWGYLSLLVLTLSGCSG). N59, N111, and N182 each carry an N-linked (GlcNAc...) asparagine glycan. Positions 144–219 (LLPEAPTQSG…DPSGKEKDQV (76 aa)) are disordered. A compositionally biased stretch (polar residues) spans 180–192 (KENQTAPQVSGDK). Over residues 194–203 (TPGEHRHSSE) the composition is skewed to basic and acidic residues. N-linked (GlcNAc...) asparagine glycosylation is found at N226 and N230. A run of 7 helical transmembrane segments spans residues 289 to 309 (LYLI…SVLC), 318 to 338 (IHWL…FHSI), 362 to 382 (LLKG…WAFV), 393 to 413 (IFGI…VIES), 427 to 447 (ILFL…VWSI), 475 to 495 (VMVI…QVAV), and 499 to 519 (WQWL…VLTG).

Belongs to the LU7TM family. In terms of tissue distribution, high expression in spleen, lung, stomach, large and small intestine, and thymus.

The protein localises to the golgi apparatus. Its subcellular location is the cis-Golgi network membrane. It localises to the trans-Golgi network membrane. It is found in the golgi apparatus membrane. In terms of biological role, may play a role in intracellular immune modulation by activating NF-kappaB response and attenuating Toll-like-receptor response. Its function is as follows. (Microbial infection) Plays an essential function in adeno-associated virus (AAV) transduction, across multiple serotypes except AAV5. May play a critical role in mediating the endosomal virus escape or in the AAV virions trafficking from endosomes to the nucleus. The protein is Protein GPR108 (Gpr108) of Mus musculus (Mouse).